We begin with the raw amino-acid sequence, 317 residues long: tRNA dimethylallyltransferase (317 aa).

14–21 provides a ligand contact to ATP; that stretch reads GPTASGKT. 16–21 contacts substrate; the sequence is TASGKT. Interaction with substrate tRNA regions lie at residues 39-42 and 163-167; these read DSAL and QRIQR.

Belongs to the IPP transferase family. In terms of assembly, monomer. It depends on Mg(2+) as a cofactor.

The enzyme catalyses adenosine(37) in tRNA + dimethylallyl diphosphate = N(6)-dimethylallyladenosine(37) in tRNA + diphosphate. In terms of biological role, catalyzes the transfer of a dimethylallyl group onto the adenine at position 37 in tRNAs that read codons beginning with uridine, leading to the formation of N6-(dimethylallyl)adenosine (i(6)A). This is tRNA dimethylallyltransferase from Stenotrophomonas maltophilia (strain K279a).